The sequence spans 351 residues: sn-glycerol-3-phosphate import ATP-binding protein UgpC (351 aa).

An ABC transporter domain is found at 4 to 234; sequence ITLKDLVKSY…PATLFVAGFI (231 aa). 36–43 provides a ligand contact to ATP; sequence GPSGCGKS.

It belongs to the ABC transporter superfamily. sn-glycerol-3-phosphate importer (TC 3.A.1.1.3) family. The complex is composed of two ATP-binding proteins (UgpC), two transmembrane proteins (UgpA and UgpE) and a solute-binding protein (UgpB).

The protein localises to the cell inner membrane. It catalyses the reaction sn-glycerol 3-phosphate(out) + ATP + H2O = sn-glycerol 3-phosphate(in) + ADP + phosphate + H(+). Functionally, part of the ABC transporter complex UgpBAEC involved in sn-glycerol-3-phosphate (G3P) import. Responsible for energy coupling to the transport system. This Ruegeria sp. (strain TM1040) (Silicibacter sp.) protein is sn-glycerol-3-phosphate import ATP-binding protein UgpC.